The primary structure comprises 537 residues: CTP synthase (537 aa).

Positions Met-1 to Leu-268 are amidoligase domain. Position 14 (Ser-14) interacts with CTP. Position 14 (Ser-14) interacts with UTP. Ser-15 to Ile-20 provides a ligand contact to ATP. L-glutamine is bound at residue Tyr-55. Asp-72 is a binding site for ATP. Positions 72 and 142 each coordinate Mg(2+). CTP-binding positions include Asp-149–Glu-151, Lys-189–Gln-194, and Lys-225. Residues Lys-189 to Gln-194 and Lys-225 contribute to the UTP site. The 243-residue stretch at Asn-293–Lys-535 folds into the Glutamine amidotransferase type-1 domain. Gly-355 contacts L-glutamine. Cys-382 (nucleophile; for glutamine hydrolysis) is an active-site residue. L-glutamine-binding positions include Leu-383–Gln-386, Glu-406, and Arg-463. Catalysis depends on residues His-508 and Glu-510.

The protein belongs to the CTP synthase family. Homotetramer.

It catalyses the reaction UTP + L-glutamine + ATP + H2O = CTP + L-glutamate + ADP + phosphate + 2 H(+). The catalysed reaction is L-glutamine + H2O = L-glutamate + NH4(+). It carries out the reaction UTP + NH4(+) + ATP = CTP + ADP + phosphate + 2 H(+). It functions in the pathway pyrimidine metabolism; CTP biosynthesis via de novo pathway; CTP from UDP: step 2/2. With respect to regulation, allosterically activated by GTP, when glutamine is the substrate; GTP has no effect on the reaction when ammonia is the substrate. The allosteric effector GTP functions by stabilizing the protein conformation that binds the tetrahedral intermediate(s) formed during glutamine hydrolysis. Inhibited by the product CTP, via allosteric rather than competitive inhibition. Its function is as follows. Catalyzes the ATP-dependent amination of UTP to CTP with either L-glutamine or ammonia as the source of nitrogen. Regulates intracellular CTP levels through interactions with the four ribonucleotide triphosphates. In Clostridium kluyveri (strain ATCC 8527 / DSM 555 / NBRC 12016 / NCIMB 10680 / K1), this protein is CTP synthase.